We begin with the raw amino-acid sequence, 235 residues long: 2-C-methyl-D-erythritol 4-phosphate cytidylyltransferase (235 aa).

The protein belongs to the IspD/TarI cytidylyltransferase family. IspD subfamily. In terms of assembly, homodimer.

It carries out the reaction 2-C-methyl-D-erythritol 4-phosphate + CTP + H(+) = 4-CDP-2-C-methyl-D-erythritol + diphosphate. The protein operates within isoprenoid biosynthesis; isopentenyl diphosphate biosynthesis via DXP pathway; isopentenyl diphosphate from 1-deoxy-D-xylulose 5-phosphate: step 2/6. Its function is as follows. Catalyzes the formation of 4-diphosphocytidyl-2-C-methyl-D-erythritol from CTP and 2-C-methyl-D-erythritol 4-phosphate (MEP). This chain is 2-C-methyl-D-erythritol 4-phosphate cytidylyltransferase, found in Serratia proteamaculans (strain 568).